The primary structure comprises 505 residues: Lysine--tRNA ligase (505 aa).

Mg(2+) contacts are provided by glutamate 415 and glutamate 422.

This sequence belongs to the class-II aminoacyl-tRNA synthetase family. In terms of assembly, homodimer. Mg(2+) serves as cofactor.

Its subcellular location is the cytoplasm. It catalyses the reaction tRNA(Lys) + L-lysine + ATP = L-lysyl-tRNA(Lys) + AMP + diphosphate. The chain is Lysine--tRNA ligase from Salmonella arizonae (strain ATCC BAA-731 / CDC346-86 / RSK2980).